The primary structure comprises 361 residues: Small ribosomal subunit protein mS46 (361 aa).

Residues 1–14 constitute a mitochondrion transit peptide; that stretch reads MRSSMFRCVSRAHY. The tract at residues 37 to 99 is disordered; it reads ASSNALKLDK…SDSVRANKQQ (63 aa). A compositionally biased stretch (basic and acidic residues) spans 43-52; that stretch reads KLDKMKEGRM. Residues 59 to 68 show a composition bias toward low complexity; sequence GNQNRNSMNN. Basic and acidic residues predominate over residues 69–91; the sequence is KESRGREGNQGERNMRLKNRSSD.

This sequence belongs to the mitochondrion-specific ribosomal protein mS46 family. Component of the mitochondrial small ribosomal subunit (mt-SSU). Mature yeast 74S mitochondrial ribosomes consist of a small (37S) and a large (54S) subunit. The 37S small subunit contains a 15S ribosomal RNA (15S mt-rRNA) and 34 different proteins. The 54S large subunit contains a 21S rRNA (21S mt-rRNA) and 46 different proteins.

The protein resides in the mitochondrion. Component of the mitochondrial ribosome (mitoribosome), a dedicated translation machinery responsible for the synthesis of mitochondrial genome-encoded proteins, including at least some of the essential transmembrane subunits of the mitochondrial respiratory chain. The mitoribosomes are attached to the mitochondrial inner membrane and translation products are cotranslationally integrated into the membrane. In Saccharomyces cerevisiae (strain ATCC 204508 / S288c) (Baker's yeast), this protein is Small ribosomal subunit protein mS46 (RSM28).